We begin with the raw amino-acid sequence, 372 residues long: 4-hydroxy-3-methylbut-2-en-1-yl diphosphate synthase (flavodoxin) (372 aa).

Positions 270, 273, 305, and 312 each coordinate [4Fe-4S] cluster.

The protein belongs to the IspG family. Requires [4Fe-4S] cluster as cofactor.

It carries out the reaction (2E)-4-hydroxy-3-methylbut-2-enyl diphosphate + oxidized [flavodoxin] + H2O + 2 H(+) = 2-C-methyl-D-erythritol 2,4-cyclic diphosphate + reduced [flavodoxin]. The protein operates within isoprenoid biosynthesis; isopentenyl diphosphate biosynthesis via DXP pathway; isopentenyl diphosphate from 1-deoxy-D-xylulose 5-phosphate: step 5/6. In terms of biological role, converts 2C-methyl-D-erythritol 2,4-cyclodiphosphate (ME-2,4cPP) into 1-hydroxy-2-methyl-2-(E)-butenyl 4-diphosphate. This chain is 4-hydroxy-3-methylbut-2-en-1-yl diphosphate synthase (flavodoxin), found in Salmonella choleraesuis (strain SC-B67).